A 126-amino-acid chain; its full sequence is Flagellar assembly factor FliW (126 aa).

This sequence belongs to the FliW family. Interacts with translational regulator CsrA and flagellin(s).

It localises to the cytoplasm. Acts as an anti-CsrA protein, binds CsrA and prevents it from repressing translation of its target genes, one of which is flagellin. Binds to flagellin and participates in the assembly of the flagellum. The sequence is that of Flagellar assembly factor FliW from Sulfurimonas denitrificans (strain ATCC 33889 / DSM 1251) (Thiomicrospira denitrificans (strain ATCC 33889 / DSM 1251)).